Consider the following 285-residue polypeptide: ATP synthase gamma chain (285 aa).

It belongs to the ATPase gamma chain family. F-type ATPases have 2 components, CF(1) - the catalytic core - and CF(0) - the membrane proton channel. CF(1) has five subunits: alpha(3), beta(3), gamma(1), delta(1), epsilon(1). CF(0) has three main subunits: a, b and c.

It localises to the cell membrane. Its function is as follows. Produces ATP from ADP in the presence of a proton gradient across the membrane. The gamma chain is believed to be important in regulating ATPase activity and the flow of protons through the CF(0) complex. This is ATP synthase gamma chain from Dehalococcoides mccartyi (strain ATCC BAA-2266 / KCTC 15142 / 195) (Dehalococcoides ethenogenes (strain 195)).